A 927-amino-acid chain; its full sequence is Transmembrane protein 132 homolog (927 aa).

The N-terminal stretch at 1–18 (MLKKLWICISCIVTTALS) is a signal peptide. Residues 749–769 (FHIFVLTIIGLIILFLFISFV) traverse the membrane as a helical segment. Residues 789–842 (LSSSSGSNSRQEETNEWVWLSQPQPPSSTISSGYSGNKSTAERQSSNGDDPSRT) form a disordered region. The segment covering 817–842 (TISSGYSGNKSTAERQSSNGDDPSRT) has biased composition (polar residues).

The protein belongs to the TMEM132 family. Interacts with gex-3. As to expression, specifically expressed in neurons.

It is found in the membrane. Its function is as follows. Regulates neuronal morphology via inhibition of the WAVE regulatory complex (WCR), a complex that controls F-actin cytoskeletal dynamics. The polypeptide is Transmembrane protein 132 homolog (Caenorhabditis elegans).